Here is a 96-residue protein sequence, read N- to C-terminus: Co-chaperonin GroES (96 aa).

This sequence belongs to the GroES chaperonin family. Heptamer of 7 subunits arranged in a ring. Interacts with the chaperonin GroEL.

It localises to the cytoplasm. Together with the chaperonin GroEL, plays an essential role in assisting protein folding. The GroEL-GroES system forms a nano-cage that allows encapsulation of the non-native substrate proteins and provides a physical environment optimized to promote and accelerate protein folding. GroES binds to the apical surface of the GroEL ring, thereby capping the opening of the GroEL channel. The chain is Co-chaperonin GroES from Nitrosomonas eutropha (strain DSM 101675 / C91 / Nm57).